Reading from the N-terminus, the 158-residue chain is ATP synthase subunit delta, mitochondrial (158 aa).

Residues 1–22 (MFRLTSARALFRVANVAARRTY) constitute a mitochondrion transit peptide.

It belongs to the ATPase epsilon chain family. F-type ATPases have 2 components, CF(1) - the catalytic core - and CF(0) - the membrane proton channel. CF(1) has five subunits: alpha(3), beta(3), gamma(1), delta(1), epsilon(1). CF(0) has three main subunits: a, b and c.

The protein localises to the mitochondrion. It is found in the mitochondrion inner membrane. Mitochondrial membrane ATP synthase (F(1)F(0) ATP synthase or Complex V) produces ATP from ADP in the presence of a proton gradient across the membrane which is generated by electron transport complexes of the respiratory chain. F-type ATPases consist of two structural domains, F(1) - containing the extramembraneous catalytic core, and F(0) - containing the membrane proton channel, linked together by a central stalk and a peripheral stalk. During catalysis, ATP turnover in the catalytic domain of F(1) is coupled via a rotary mechanism of the central stalk subunits to proton translocation. Part of the complex F(1) domain and of the central stalk which is part of the complex rotary element. Rotation of the central stalk against the surrounding alpha(3)beta(3) subunits leads to hydrolysis of ATP in three separate catalytic sites on the beta subunits. The chain is ATP synthase subunit delta, mitochondrial (ATP16) from Eremothecium gossypii (strain ATCC 10895 / CBS 109.51 / FGSC 9923 / NRRL Y-1056) (Yeast).